The primary structure comprises 223 residues: Ribosome assembly factor mrt4 (223 aa).

This sequence belongs to the universal ribosomal protein uL10 family. As to quaternary structure, associates with the pre-60S ribosomal particle.

It localises to the nucleus. It is found in the nucleolus. The protein resides in the cytoplasm. Functionally, component of the ribosome assembly machinery. Nuclear paralog of the ribosomal protein P0, it binds pre-60S subunits at an early stage of assembly in the nucleolus, and is replaced by P0 in cytoplasmic pre-60S subunits and mature 80S ribosomes. This Dictyostelium discoideum (Social amoeba) protein is Ribosome assembly factor mrt4.